Consider the following 131-residue polypeptide: Small ribosomal subunit protein uS8 (131 aa).

Belongs to the universal ribosomal protein uS8 family. Part of the 30S ribosomal subunit. Contacts proteins S5 and S12.

One of the primary rRNA binding proteins, it binds directly to 16S rRNA central domain where it helps coordinate assembly of the platform of the 30S subunit. In Vesicomyosocius okutanii subsp. Calyptogena okutanii (strain HA), this protein is Small ribosomal subunit protein uS8.